The primary structure comprises 88 residues: Small ribosomal subunit protein uS17 (88 aa).

Belongs to the universal ribosomal protein uS17 family. In terms of assembly, part of the 30S ribosomal subunit.

One of the primary rRNA binding proteins, it binds specifically to the 5'-end of 16S ribosomal RNA. This Prochlorococcus marinus (strain MIT 9303) protein is Small ribosomal subunit protein uS17.